Consider the following 845-residue polypeptide: Proto-oncogene vav (845 aa).

In terms of domain architecture, Calponin-homology (CH) spans 1 to 119 (MELWRQCTHW…YTLSALSWTP (119 aa)). One can recognise a DH domain in the interval 194–373 (KRCCCLREIQ…RDLAQCVNEV (180 aa)). Positions 402–504 (RPKIDGELKI…WMEQFEMAIS (103 aa)) constitute a PH domain. Residues 515–564 (GHDFQMFSFEETTSCKACQMLLRGTFYQGYRCYRCRAPAHKECLGRVPPC) form a Phorbol-ester/DAG-type zinc finger. One can recognise an SH3 1 domain in the interval 592–660 (LGLPKMEVFQ…PCNRVHPYVH (69 aa)). An SH2 domain is found at 671 to 765 (WYAGPMERAG…SLDTTLQFPY (95 aa)). An SH3 2 domain is found at 782-842 (KYFGTAKARY…PSNYVEEDYS (61 aa)). 2 positions are modified to phosphotyrosine: Y826 and Y844.

As to quaternary structure, interacts with SHB. Interacts with APS, DOCK2, GRB2, GRB3, DOCK2, SLA, TEC and ZNF655/VIK. Interacts with SIAH2; without leading to its degradation. Associates with BLNK, PLCG1, GRB2 and NCK1 in a B-cell antigen receptor-dependent fashion. Interacts with CBLB; which inhibits tyrosine phosphorylation and down-regulates activity. May interact with CCPG1. Interacts with CLNK. Interacts with THEMIS2. Interacts with NEK3 and this interaction is prolactin-dependent. Interacts with ITK. Interacts with PTK2B/PYK2. Interacts with HCK. Interacts with PTK2B/PYK2. Interacts (via SH2 domain) with SYK. Interacts with ANKRD54. Interacts with CD6. Interacts with isoform 2 of CRACR2A. Interacts with LCP2; this interaction plays a role in TCR-mediated cytokine production. Post-translationally, phosphorylated by FYN. Phosphorylated on tyrosine residues by HCK in response to IFNG and bacterial lipopolysaccharide (LPS). As to expression, widely expressed in hematopoietic cells but not in other cell types. Found in the spleen and lung.

Couples tyrosine kinase signals with the activation of the Rho/Rac GTPases, thus leading to cell differentiation and/or proliferation. In Mus musculus (Mouse), this protein is Proto-oncogene vav (Vav1).